The following is a 258-amino-acid chain: Ribosomal RNA small subunit methyltransferase A (258 aa).

Residues His-13, Leu-15, Gly-40, Glu-61, Asp-86, and Asn-106 each coordinate S-adenosyl-L-methionine.

This sequence belongs to the class I-like SAM-binding methyltransferase superfamily. rRNA adenine N(6)-methyltransferase family. RsmA subfamily.

The protein resides in the cytoplasm. The enzyme catalyses adenosine(1518)/adenosine(1519) in 16S rRNA + 4 S-adenosyl-L-methionine = N(6)-dimethyladenosine(1518)/N(6)-dimethyladenosine(1519) in 16S rRNA + 4 S-adenosyl-L-homocysteine + 4 H(+). Its function is as follows. Specifically dimethylates two adjacent adenosines (A1518 and A1519) in the loop of a conserved hairpin near the 3'-end of 16S rRNA in the 30S particle. May play a critical role in biogenesis of 30S subunits. This Coxiella burnetii (strain RSA 331 / Henzerling II) protein is Ribosomal RNA small subunit methyltransferase A.